A 325-amino-acid chain; its full sequence is Tetraacyldisaccharide 4'-kinase (325 aa).

Position 55–62 (55–62 (TAGGNGKT)) interacts with ATP.

Belongs to the LpxK family.

The catalysed reaction is a lipid A disaccharide + ATP = a lipid IVA + ADP + H(+). It participates in glycolipid biosynthesis; lipid IV(A) biosynthesis; lipid IV(A) from (3R)-3-hydroxytetradecanoyl-[acyl-carrier-protein] and UDP-N-acetyl-alpha-D-glucosamine: step 6/6. In terms of biological role, transfers the gamma-phosphate of ATP to the 4'-position of a tetraacyldisaccharide 1-phosphate intermediate (termed DS-1-P) to form tetraacyldisaccharide 1,4'-bis-phosphate (lipid IVA). The chain is Tetraacyldisaccharide 4'-kinase from Salmonella agona (strain SL483).